Here is a 328-residue protein sequence, read N- to C-terminus: Sin3 histone deacetylase corepressor complex component SDS3 (328 aa).

Low complexity predominate over residues 1–22; that stretch reads MSAAGLLAPAPAPAAAPAAPEY. The interval 1-69 is disordered; it reads MSAAGLLAPA…HDEEDYVEMK (69 aa). The residue at position 2 (Ser2) is an N-acetylserine. A mediates interaction with USP17L2 region spans residues 2–170; the sequence is SAAGLLAPAP…IENEKLTMEL (169 aa). Acidic residues-rich tracts occupy residues 23 to 37 and 45 to 54; these read YPED…EDDE and SDEDTEDASE. Phosphoserine occurs at positions 32 and 45. At Thr49 the chain carries Phosphothreonine. At Ser53 the chain carries Phosphoserine. Residues 56–69 show a composition bias toward basic and acidic residues; sequence DLAKHDEEDYVEMK. The stretch at 66–171 forms a coiled coil; it reads VEMKEQMYQD…ENEKLTMELT (106 aa). Residues Lys69, Lys178, and Lys201 each participate in a glycyl lysine isopeptide (Lys-Gly) (interchain with G-Cter in SUMO2) cross-link. The segment at 188-226 is sin3 interaction domain (SID); that stretch reads RPNDPVPIPDKRRKPAPAQLNYLLTDEQIMEDLRTLNKL. A disordered region spans residues 226 to 252; sequence LKSPKRPASPSSPEHLPATPAESPAQR. 3 positions are modified to phosphoserine: Ser228, Ser234, and Ser237. A Phosphothreonine modification is found at Thr244.

This sequence belongs to the SDS3 family. As to quaternary structure, interacts with HCFC1. Homodimer. Component of the SIN3 histone deacetylase (HDAC) corepressor complex. Interacts with SIN3A. Interaction with SIN3B enhances the interaction between SIN3B and HDAC1 to form a complex. Component of a mSin3A corepressor complex that contains SIN3A, SAP130, SUDS3/SAP45, ARID4B/SAP180, HDAC1 and HDAC2. Interacts with USP17L2; the interaction is direct. Interacts with FOXK2. Post-translationally, polyubiquitinated. 'Lys-63'-polyubiquitinated SUDS3 positively regulates histone deacetylation. Regulated through deubiquitination by USP17L2/USP17 that cleaves 'Lys-63'-linked ubiquitin chains. Expressed in all newborn tissues tested, including brain, kidney and liver.

It is found in the nucleus. Its function is as follows. Regulatory protein which represses transcription and augments histone deacetylase activity of HDAC1. May have a potential role in tumor suppressor pathways through regulation of apoptosis. May function in the assembly and/or enzymatic activity of the mSin3A corepressor complex or in mediating interactions between the complex and other regulatory complexes. This is Sin3 histone deacetylase corepressor complex component SDS3 (Suds3) from Mus musculus (Mouse).